Reading from the N-terminus, the 1177-residue chain is Chromosome partition protein Smc (1177 aa).

Residue 34–41 (ANGSGKSN) coordinates ATP. Positions 167–506 (SGIAEYDSKK…IAAEAQREVR (340 aa)) form a coiled coil. Residues 521 to 627 (GIYGTLAELI…VIVNSMEEAR (107 aa)) form the SMC hinge domain. Residues 659–1012 (LAVDTTKLRE…NEIEKEKKNV (354 aa)) adopt a coiled-coil conformation.

Belongs to the SMC family. As to quaternary structure, homodimer.

It localises to the cytoplasm. Its function is as follows. Required for chromosome condensation and partitioning. Binds single-stranded but not double-stranded DNA. This Pyrococcus furiosus (strain ATCC 43587 / DSM 3638 / JCM 8422 / Vc1) protein is Chromosome partition protein Smc.